The following is a 149-amino-acid chain: MTVDNVFIHAVPREQIRRRYSYFEAFEKNCHIQGILSKRALYMLIPCFMEFAVGSIVYSFGVPGWVLGMNTVLAAGFLVMFLFLVWPCFQLVDERQIEEPGEDEMALNAGGYYPYAEEVPPPSYPSLEEENEGNEEIEESEEMNTLLSK.

Phosphoserine is present on Ser-21. 2 consecutive transmembrane segments (helical) span residues 48 to 68 (FMEF…WVLG) and 72 to 92 (VLAA…FQLV). Residues 116–149 (AEEVPPPSYPSLEEENEGNEEIEESEEMNTLLSK) form a disordered region. Residues 127–142 (LEEENEGNEEIEESEE) are compositionally biased toward acidic residues.

It is found in the membrane. This is an uncharacterized protein from Schizosaccharomyces pombe (strain 972 / ATCC 24843) (Fission yeast).